The primary structure comprises 223 residues: FAD-dependent monooxygenase imqC (223 aa).

Residues R139 to Y141, Y189, and D210 each bind FAD.

This sequence belongs to the PheA/TfdB FAD monooxygenase family.

It functions in the pathway secondary metabolite biosynthesis. Its function is as follows. FAD-dependent monooxygenase; part of the gene cluster that mediates the biosynthesis of imizoquins A to D, tripeptide-derived alkaloids that serve a protective role against oxidative stress that are essential for normal germination. ImqB is a canonical three-module NRPS that assembles the tripeptide backbone of the imizoquins via condensation of Trp, Tyr, and Leu-derived precursors. N-methylation by imqF and phenol oxidation by imqC, followed by cyclization via the FAD-dependent oxidase imqH carry out the three-step transformation of L-tyrosine into tetrahydroisoquinoline. Importantly, this sequence requires the presence of a free amine in the tyrosine moiety, indicating that isoquinoline formation occurs prior to peptide bond formation. The imidazolidin-4-one ring of imizoquins could form following additional oxidation of the methyl-derived bridgehead carbon by imqH. Lastly, O-methylation by imqG and leucine hydroxylation by imqE complete biosynthesis of the imizoquins. This Aspergillus flavus (strain ATCC 200026 / FGSC A1120 / IAM 13836 / NRRL 3357 / JCM 12722 / SRRC 167) protein is FAD-dependent monooxygenase imqC.